A 533-amino-acid polypeptide reads, in one-letter code: Laccase-2 (533 aa).

The N-terminal stretch at 1–23 (MFPGARILATLTLALHLLHGAHA) is a signal peptide. Plastocyanin-like domains lie at 25–171 (IGPA…LSLY), 173–336 (IDNA…LETN), and 382–501 (TAPV…FAED). Histidine 98, histidine 100, histidine 143, and histidine 145 together coordinate Cu cation. Disulfide bonds link cysteine 119–cysteine 516 and cysteine 151–cysteine 238. Cu cation-binding residues include histidine 427, histidine 430, and histidine 432. Asparagine 467 carries N-linked (GlcNAc...) (high mannose) asparagine glycosylation. Cu cation-binding residues include histidine 483, cysteine 484, histidine 485, and histidine 489.

It belongs to the multicopper oxidase family. Requires Cu cation as cofactor. N-glycosylated at Asn-467; contains a high-mannose glycan with a varying number of mannose residues.

The protein resides in the secreted. The catalysed reaction is 4 hydroquinone + O2 = 4 benzosemiquinone + 2 H2O. Lignin degradation and detoxification of lignin-derived products. The chain is Laccase-2 (POX2) from Pleurotus ostreatus (Oyster mushroom).